Here is a 216-residue protein sequence, read N- to C-terminus: Ribosomal RNA large subunit methyltransferase E (216 aa).

Gly-60, Trp-62, Asp-80, Asp-96, and Asp-121 together coordinate S-adenosyl-L-methionine. The active-site Proton acceptor is Lys-161.

It belongs to the class I-like SAM-binding methyltransferase superfamily. RNA methyltransferase RlmE family.

Its subcellular location is the cytoplasm. The enzyme catalyses uridine(2552) in 23S rRNA + S-adenosyl-L-methionine = 2'-O-methyluridine(2552) in 23S rRNA + S-adenosyl-L-homocysteine + H(+). Specifically methylates the uridine in position 2552 of 23S rRNA at the 2'-O position of the ribose in the fully assembled 50S ribosomal subunit. The protein is Ribosomal RNA large subunit methyltransferase E of Pseudomonas syringae pv. syringae (strain B728a).